Consider the following 75-residue polypeptide: Conotoxin VnMSGL-0111 (75 aa).

Residues 1–20 (MSGLEIMVLTLLLLVSMATS) form the signal peptide. The propeptide occupies 21 to 44 (HQDGGEKQATQRDAINVRRRSITR). 3 disulfide bridges follow: cysteine 48/cysteine 60, cysteine 52/cysteine 69, and cysteine 59/cysteine 73.

This sequence belongs to the conotoxin O3 superfamily. In terms of tissue distribution, expressed by the venom duct.

Its subcellular location is the secreted. The chain is Conotoxin VnMSGL-0111 from Conus ventricosus (Mediterranean cone).